We begin with the raw amino-acid sequence, 131 residues long: Small ribosomal subunit protein uS8 (131 aa).

This sequence belongs to the universal ribosomal protein uS8 family. As to quaternary structure, part of the 30S ribosomal subunit. Contacts proteins S5 and S12.

In terms of biological role, one of the primary rRNA binding proteins, it binds directly to 16S rRNA central domain where it helps coordinate assembly of the platform of the 30S subunit. This is Small ribosomal subunit protein uS8 from Wolbachia pipientis subsp. Culex pipiens (strain wPip).